We begin with the raw amino-acid sequence, 460 residues long: Ankyrin repeat and MYND domain-containing protein 2 (460 aa).

ANK repeat units follow at residues 45 to 74 (HGMTPLMHAAYKGKVDMCRLLLRHGADVNC), 79 to 108 (HGYTALMFAGLSGNKEITWMMLEAGAETDV), and 159 to 188 (KLAGPLHKIITTTNMHPVKIVLLVKENPLL). Zn(2+) is bound by residues C320, C323, C332, C335, C341, C345, H353, and C357. Residues 320–357 (CTTCGEKGADKRCSVCKVVMYCDQNCQKTHWFTHKKVC) form an MYND-type zinc finger. 2 stretches are compositionally biased toward basic and acidic residues: residues 371–387 (AAKEKRRQEKKQKKDEA) and 425–436 (ELTKEPEARAPR). The tract at residues 371–460 (AAKEKRRQEK…ALQKIQDSEE (90 aa)) is disordered.

Its subcellular location is the cell projection. The protein resides in the cilium. Functionally, may be involved in the trafficking of signaling proteins to the cilia. This is Ankyrin repeat and MYND domain-containing protein 2 (ANKMY2) from Gallus gallus (Chicken).